The following is a 432-amino-acid chain: MALRPCTGFTISSLRNASAANNNLFSLLSFSSSSPAKRNLLLSSLQDNLRRFASSASLYRQHLRNQQQQHQQQQQSRVKEKSETLAQKIGKSIRRAGAPSKARVYADVNVVRPKDYWDYESLAVQWGVQDDYEVVRKVGRGKYSEVFEGIHATDNEKCVIKILKPVKKKKIKREIKILQNLCGGPNIVKLLDIVRDQQSKTPSLIFEHVNNKDFKVLYPTLSDYDVRYYIFELLKALDFCHSRGIMHRDVKPHNVMIDHEQRKLRLIDWGLAEFYHPGKEYNVRVASRYFKGPELLVDLQDYDYSLDLWSLGCMFAGMIFRKEPFFYGHDNYDQLVKIAKVLGTDELNAYLNKYRIELDPNLTSLVGRHSRKPWTKFINSENQHLAVPEAVDFVDKLLRYDHQERPTAKEAMAHPYFYPIRNAESSRTPRSQ.

Residues 1-55 constitute a chloroplast transit peptide; that stretch reads MALRPCTGFTISSLRNASAANNNLFSLLSFSSSSPAKRNLLLSSLQDNLRRFASS. A disordered region spans residues 63 to 83; it reads LRNQQQQHQQQQQSRVKEKSE. The span at 66-75 shows a compositional bias: low complexity; the sequence is QQQQHQQQQQ. The region spanning 132–417 is the Protein kinase domain; it reads YEVVRKVGRG…AKEAMAHPYF (286 aa). ATP-binding positions include 138–146 and lysine 161; that span reads VGRGKYSEV. Aspartate 249 acts as the Proton acceptor in catalysis.

This sequence belongs to the protein kinase superfamily. Ser/Thr protein kinase family. CK2 subfamily. As to quaternary structure, tetramer of two alpha and two beta chains. In terms of tissue distribution, expressed in root tips, lateral root primordia, cotyledons, leaf primordia, sepals, filaments, stigma, and anthers.

It localises to the plastid. It is found in the chloroplast. It carries out the reaction L-seryl-[protein] + ATP = O-phospho-L-seryl-[protein] + ADP + H(+). The enzyme catalyses L-threonyl-[protein] + ATP = O-phospho-L-threonyl-[protein] + ADP + H(+). Its function is as follows. Casein kinases are operationally defined by their preferential utilization of acidic proteins such as caseins as substrates. The alpha chain contains the catalytic site. Involved in the regulation of various developmental processes. Involved in the regulation of plant growth and flowering time. Involved in retrograde signaling in plant responses to abscisic acid (ABA) and heat stress. May act as an enhancing factor in abiotic stress signaling through modulation of the expression of some molecular players in retrograde signaling. Phosphorylates RuBisCo activase (RCA) at Thr-78. The protein is Casein kinase II subunit alpha-4, chloroplastic of Arabidopsis thaliana (Mouse-ear cress).